The sequence spans 260 residues: Methylesterase 7 (260 aa).

Ser84 (acyl-ester intermediate) is an active-site residue. Catalysis depends on charge relay system residues Asp210 and His238.

This sequence belongs to the AB hydrolase superfamily. Methylesterase family.

The catalysed reaction is methyl (indol-3-yl)acetate + H2O = (indol-3-yl)acetate + methanol + H(+). It carries out the reaction methyl salicylate + H2O = salicylate + methanol + H(+). It functions in the pathway plant hormone biosynthesis. Esterase activity is down-regulated by salicylic acid (SA). Methylesterase shown to have carboxylesterase activity, methyl indole-3-acetic acid (MeIAA) esterase activity and methyl salicylate (MeSA) esterase activity in vitro. Required to convert methyl salicylate (MeSA) to salicylic acid (SA) as part of the signal transduction pathways that activate systemic acquired resistance in systemic tissue. MeSA is believed to be an inactive form that needs to be demethylated to exert a biological effect. The chain is Methylesterase 7 from Arabidopsis thaliana (Mouse-ear cress).